Consider the following 349-residue polypeptide: MQSFVHKIWYQGHPAAWLLLPLSLLFWLVSSLRRAAFRLGLKRSERLPVPVVVVGNITAGGSGKTPTVLYLIELLRREGWRPGVISRGYGASFDGELDVVAGMSPAQVGDEPAMIAMRTGIPMVVGRNRIKAAHKLLQCHDVNVILCDDGLQHYALERDVEILVIDGERRFGNGWLLPAGPLREGAWRKNSVNFVLCNGASAEADEYAMTLEPTGLVAVAAIHGKSQAKDNSHNAQDNATPRPGDTVNAMAGIGNPQRFFSTLMAQGFVLEKAHEFADHMAFSETDIATIDDGRPLLMTEKDAVKCREFAKQHWWYLAVDANLPPTFSTRLLDALNRAATAKQGNTHGL.

Threonine 58–threonine 65 provides a ligand contact to ATP.

The protein belongs to the LpxK family.

The enzyme catalyses a lipid A disaccharide + ATP = a lipid IVA + ADP + H(+). It functions in the pathway glycolipid biosynthesis; lipid IV(A) biosynthesis; lipid IV(A) from (3R)-3-hydroxytetradecanoyl-[acyl-carrier-protein] and UDP-N-acetyl-alpha-D-glucosamine: step 6/6. Its function is as follows. Transfers the gamma-phosphate of ATP to the 4'-position of a tetraacyldisaccharide 1-phosphate intermediate (termed DS-1-P) to form tetraacyldisaccharide 1,4'-bis-phosphate (lipid IVA). In Shewanella amazonensis (strain ATCC BAA-1098 / SB2B), this protein is Tetraacyldisaccharide 4'-kinase.